The following is a 785-amino-acid chain: Endonuclease MutS2 (785 aa).

335–342 (GPNTGGKT) contributes to the ATP binding site. The 76-residue stretch at 710–785 (LDLRGERYEE…GLGNTVVELR (76 aa)) folds into the Smr domain. Residues 764-785 (VKSARDGGANEGGLGNTVVELR) form a disordered region.

It belongs to the DNA mismatch repair MutS family. MutS2 subfamily. In terms of assembly, homodimer. Binds to stalled ribosomes, contacting rRNA.

Its function is as follows. Endonuclease that is involved in the suppression of homologous recombination and thus may have a key role in the control of bacterial genetic diversity. Acts as a ribosome collision sensor, splitting the ribosome into its 2 subunits. Detects stalled/collided 70S ribosomes which it binds and splits by an ATP-hydrolysis driven conformational change. Acts upstream of the ribosome quality control system (RQC), a ribosome-associated complex that mediates the extraction of incompletely synthesized nascent chains from stalled ribosomes and their subsequent degradation. Probably generates substrates for RQC. The polypeptide is Endonuclease MutS2 (Halalkalibacterium halodurans (strain ATCC BAA-125 / DSM 18197 / FERM 7344 / JCM 9153 / C-125) (Bacillus halodurans)).